Reading from the N-terminus, the 143-residue chain is Phosphoribosyl-AMP cyclohydrolase (143 aa).

Asp-86 provides a ligand contact to Mg(2+). Cys-87 contributes to the Zn(2+) binding site. The Mg(2+) site is built by Asp-88 and Asp-90. Residues Cys-103 and Cys-110 each coordinate Zn(2+).

It belongs to the PRA-CH family. In terms of assembly, homodimer. It depends on Mg(2+) as a cofactor. Zn(2+) is required as a cofactor.

The protein resides in the cytoplasm. It carries out the reaction 1-(5-phospho-beta-D-ribosyl)-5'-AMP + H2O = 1-(5-phospho-beta-D-ribosyl)-5-[(5-phospho-beta-D-ribosylamino)methylideneamino]imidazole-4-carboxamide. It functions in the pathway amino-acid biosynthesis; L-histidine biosynthesis; L-histidine from 5-phospho-alpha-D-ribose 1-diphosphate: step 3/9. Its function is as follows. Catalyzes the hydrolysis of the adenine ring of phosphoribosyl-AMP. In Rhodospirillum rubrum (strain ATCC 11170 / ATH 1.1.1 / DSM 467 / LMG 4362 / NCIMB 8255 / S1), this protein is Phosphoribosyl-AMP cyclohydrolase.